The primary structure comprises 180 residues: Large ribosomal subunit protein uL5c (180 aa).

The protein belongs to the universal ribosomal protein uL5 family. As to quaternary structure, part of the 50S ribosomal subunit; contacts the 5S rRNA.

Its subcellular location is the plastid. It is found in the chloroplast. Binds 5S rRNA, forms part of the central protuberance of the 50S subunit. This chain is Large ribosomal subunit protein uL5c (rpl5), found in Oedogonium cardiacum (Filamentous green alga).